A 495-amino-acid polypeptide reads, in one-letter code: Glutamate--tRNA ligase (495 aa).

Residues 12-22 carry the 'HIGH' region motif; that stretch reads PSPTGHLHIGN. The 'KMSKS' region motif lies at 259–263; that stretch reads KLSKR. Lys262 contacts ATP.

The protein belongs to the class-I aminoacyl-tRNA synthetase family. Glutamate--tRNA ligase type 1 subfamily. In terms of assembly, monomer.

The protein localises to the cytoplasm. It catalyses the reaction tRNA(Glu) + L-glutamate + ATP = L-glutamyl-tRNA(Glu) + AMP + diphosphate. In terms of biological role, catalyzes the attachment of glutamate to tRNA(Glu) in a two-step reaction: glutamate is first activated by ATP to form Glu-AMP and then transferred to the acceptor end of tRNA(Glu). This is Glutamate--tRNA ligase from Ligilactobacillus salivarius (strain UCC118) (Lactobacillus salivarius).